The following is a 124-amino-acid chain: Large ribosomal subunit protein bL12 (124 aa).

The protein belongs to the bacterial ribosomal protein bL12 family. In terms of assembly, homodimer. Part of the ribosomal stalk of the 50S ribosomal subunit. Forms a multimeric L10(L12)X complex, where L10 forms an elongated spine to which 2 to 4 L12 dimers bind in a sequential fashion. Binds GTP-bound translation factors.

In terms of biological role, forms part of the ribosomal stalk which helps the ribosome interact with GTP-bound translation factors. Is thus essential for accurate translation. The protein is Large ribosomal subunit protein bL12 of Brucella abortus (strain S19).